Here is a 285-residue protein sequence, read N- to C-terminus: Pantothenate synthetase (285 aa).

30 to 37 (MGNLHDGH) lines the ATP pocket. Catalysis depends on H37, which acts as the Proton donor. Q61 contacts (R)-pantoate. A beta-alanine-binding site is contributed by Q61. ATP is bound at residue 149 to 152 (GEKD). A (R)-pantoate-binding site is contributed by Q155. ATP-binding positions include I178 and 186 to 189 (LSSR).

Belongs to the pantothenate synthetase family. As to quaternary structure, homodimer.

Its subcellular location is the cytoplasm. It carries out the reaction (R)-pantoate + beta-alanine + ATP = (R)-pantothenate + AMP + diphosphate + H(+). The protein operates within cofactor biosynthesis; (R)-pantothenate biosynthesis; (R)-pantothenate from (R)-pantoate and beta-alanine: step 1/1. Catalyzes the condensation of pantoate with beta-alanine in an ATP-dependent reaction via a pantoyl-adenylate intermediate. The sequence is that of Pantothenate synthetase from Buchnera aphidicola subsp. Acyrthosiphon pisum (strain 5A).